A 119-amino-acid polypeptide reads, in one-letter code: Nascent polypeptide-associated complex protein (119 aa).

The NAC-A/B domain maps to 5-73; the sequence is RMNSREMRRL…MREVPKEPEE (69 aa).

The protein belongs to the NAC-alpha family. As to quaternary structure, homodimer. Interacts with the ribosome. Binds ribosomal RNA.

Contacts the emerging nascent chain on the ribosome. The protein is Nascent polypeptide-associated complex protein of Thermoplasma acidophilum (strain ATCC 25905 / DSM 1728 / JCM 9062 / NBRC 15155 / AMRC-C165).